Consider the following 360-residue polypeptide: Phosphoserine aminotransferase (360 aa).

Arg-41 provides a ligand contact to L-glutamate. Residues Trp-101, Thr-152, Asp-172, and Gln-195 each contribute to the pyridoxal 5'-phosphate site. At Lys-196 the chain carries N6-(pyridoxal phosphate)lysine. 237–238 (NT) lines the pyridoxal 5'-phosphate pocket.

This sequence belongs to the class-V pyridoxal-phosphate-dependent aminotransferase family. SerC subfamily. Homodimer. Pyridoxal 5'-phosphate serves as cofactor.

It localises to the cytoplasm. It catalyses the reaction O-phospho-L-serine + 2-oxoglutarate = 3-phosphooxypyruvate + L-glutamate. The catalysed reaction is 4-(phosphooxy)-L-threonine + 2-oxoglutarate = (R)-3-hydroxy-2-oxo-4-phosphooxybutanoate + L-glutamate. It participates in amino-acid biosynthesis; L-serine biosynthesis; L-serine from 3-phospho-D-glycerate: step 2/3. Its pathway is cofactor biosynthesis; pyridoxine 5'-phosphate biosynthesis; pyridoxine 5'-phosphate from D-erythrose 4-phosphate: step 3/5. Its function is as follows. Catalyzes the reversible conversion of 3-phosphohydroxypyruvate to phosphoserine and of 3-hydroxy-2-oxo-4-phosphonooxybutanoate to phosphohydroxythreonine. The polypeptide is Phosphoserine aminotransferase (Burkholderia multivorans (strain ATCC 17616 / 249)).